A 237-amino-acid polypeptide reads, in one-letter code: Glutathione S-transferase psoE (237 aa).

One can recognise a GST N-terminal domain in the interval 2 to 79 (VFGTLYTFPG…YITSQNEQTT (78 aa)). Glutathione-binding residues include arginine 37, lysine 49, valine 50, glutamate 63, cysteine 64, and asparagine 99. Lysine 49 contributes to the substrate binding site. The region spanning 84-222 (DKKEYAEIIK…NNPPEKKPET (139 aa)) is the GST C-terminal domain. Residue glutamine 108 coordinates substrate. A compositionally biased stretch (basic and acidic residues) spans 208–222 (EPKLTNNPPEKKPET). The interval 208 to 237 (EPKLTNNPPEKKPETVPKNGAAVAIEATQA) is disordered.

This sequence belongs to the GST superfamily. Glutathione serves as cofactor.

It participates in secondary metabolite biosynthesis. Its function is as follows. Glutathione S-transferase; part of the gene cluster that mediates the biosynthesis of pseurotin A, a competitive inhibitor of chitin synthase and an inducer of nerve-cell proliferation. The PKS-NRPS hybrid synthetase psoA is responsible for the biosynthesis of azaspirene, one of the first intermediates having the 1-oxa-7-azaspiro[4,4]-non-2-ene-4,6-dione core of pseurotin, via condensation of one acetyl-CoA, 4 malonyl-CoA, and a L-phenylalanine molecule. The dual-functional monooxygenase/methyltransferase psoF seems to be involved in the addition of the C3 methyl group onto the pseurotin scaffold. Azaspirene is then converted to synerazol through 4 steps including oxidation of C17 by the cytochrome P450 monooxygenase psoD, O-methylation of the hydroxy group of C8 by the methyltransferase psoC, and the trans-to-cis isomerization of the C13 olefin by the glutathione S-transferase psoE. The fourth step of synerazol production is performed by the dual-functional monooxygenase/methyltransferase psoF which seems to catalyze the epoxidation of the intermediate deepoxy-synerazol. Synerazol can be attacked by a water molecule nonenzymatically at two different positions to yield two diol products, pseurotin A and pseurotin D. This chain is Glutathione S-transferase psoE, found in Aspergillus fumigatus (strain ATCC MYA-4609 / CBS 101355 / FGSC A1100 / Af293) (Neosartorya fumigata).